The sequence spans 40 residues: Photosystem II reaction center protein X (40 aa).

Topologically, residues 1-11 (TITPSLKGFFI) are lumenal. The chain crosses the membrane as a helical span at residues 12–28 (GLLSGAVVLGLTFAVLI). Over 29-40 (AISQIDKVQRSL) the chain is Cytoplasmic.

Belongs to the PsbX family. Type 1 subfamily. As to quaternary structure, PSII is composed of 1 copy each of membrane proteins PsbA, PsbB, PsbC, PsbD, PsbE, PsbF, PsbH, PsbI, PsbJ, PsbK, PsbL, PsbM, PsbT, PsbX, PsbY, PsbZ, Psb30/Ycf12, peripheral proteins PsbO, CyanoQ (PsbQ), PsbU, PsbV and a large number of cofactors. It forms dimeric complexes. PSII binds multiple chlorophylls, carotenoids and specific lipids. serves as cofactor.

The protein resides in the cellular thylakoid membrane. Its function is as follows. Involved in the binding and/or turnover of quinones at the Q(B) site of photosystem II (PSII). PSII is a light-driven water plastoquinone oxidoreductase, using light energy to abstract electrons from H(2)O, generating a proton gradient subsequently used for ATP formation. This is Photosystem II reaction center protein X from Thermostichus vulcanus (Synechococcus vulcanus).